Here is a 72-residue protein sequence, read N- to C-terminus: Putative snRNP Sm-like protein (72 aa).

The Sm domain occupies 4–72; the sequence is RPLDILNDAL…RGDNVVYVSP (69 aa).

This sequence belongs to the snRNP Sm proteins family.

This chain is Putative snRNP Sm-like protein, found in Methanococcoides burtonii (strain DSM 6242 / NBRC 107633 / OCM 468 / ACE-M).